The sequence spans 340 residues: Uroporphyrinogen decarboxylase (340 aa).

Substrate-binding positions include Arg21–Arg25, Asp71, Tyr148, Ser203, and His316.

It belongs to the uroporphyrinogen decarboxylase family. In terms of assembly, homodimer.

The protein resides in the cytoplasm. The catalysed reaction is uroporphyrinogen III + 4 H(+) = coproporphyrinogen III + 4 CO2. It participates in porphyrin-containing compound metabolism; protoporphyrin-IX biosynthesis; coproporphyrinogen-III from 5-aminolevulinate: step 4/4. Its function is as follows. Catalyzes the decarboxylation of four acetate groups of uroporphyrinogen-III to yield coproporphyrinogen-III. In Campylobacter hominis (strain ATCC BAA-381 / DSM 21671 / CCUG 45161 / LMG 19568 / NCTC 13146 / CH001A), this protein is Uroporphyrinogen decarboxylase.